A 232-amino-acid polypeptide reads, in one-letter code: Cytidylate kinase (232 aa).

11-19 contacts ATP; it reads GPAGAGKST.

The protein belongs to the cytidylate kinase family. Type 1 subfamily.

The protein localises to the cytoplasm. It catalyses the reaction CMP + ATP = CDP + ADP. The enzyme catalyses dCMP + ATP = dCDP + ADP. The chain is Cytidylate kinase from Desulfitobacterium hafniense (strain Y51).